We begin with the raw amino-acid sequence, 85 residues long: MKRNQRKVLIGIVKSTKNAKTATVQVESRFKHPLYHKSVVRHKKYQAHNEGEVLAKDGDKVQIVETRPLSATKRFRIAKIIERAK.

This sequence belongs to the universal ribosomal protein uS17 family. In terms of assembly, part of the 30S ribosomal subunit.

In terms of biological role, one of the primary rRNA binding proteins, it binds specifically to the 5'-end of 16S ribosomal RNA. The chain is Small ribosomal subunit protein uS17 from Mycoplasma pneumoniae (strain ATCC 29342 / M129 / Subtype 1) (Mycoplasmoides pneumoniae).